The following is a 278-amino-acid chain: Putative B3 domain-containing protein At2g21920 (278 aa).

The segment at residues 168 to 275 (ISKTLSRTDV…KFIILNFEYN (108 aa)) is a DNA-binding region (TF-B3).

It localises to the nucleus. This chain is Putative B3 domain-containing protein At2g21920, found in Arabidopsis thaliana (Mouse-ear cress).